A 291-amino-acid chain; its full sequence is Ribosomal RNA small subunit methyltransferase A (291 aa).

H37, L39, G64, E85, D110, and N131 together coordinate S-adenosyl-L-methionine.

Belongs to the class I-like SAM-binding methyltransferase superfamily. rRNA adenine N(6)-methyltransferase family. RsmA subfamily.

It is found in the cytoplasm. It carries out the reaction adenosine(1518)/adenosine(1519) in 16S rRNA + 4 S-adenosyl-L-methionine = N(6)-dimethyladenosine(1518)/N(6)-dimethyladenosine(1519) in 16S rRNA + 4 S-adenosyl-L-homocysteine + 4 H(+). In terms of biological role, specifically dimethylates two adjacent adenosines (A1518 and A1519) in the loop of a conserved hairpin near the 3'-end of 16S rRNA in the 30S particle. May play a critical role in biogenesis of 30S subunits. This Dehalococcoides mccartyi (strain ATCC BAA-2100 / JCM 16839 / KCTC 5957 / BAV1) protein is Ribosomal RNA small subunit methyltransferase A.